A 234-amino-acid polypeptide reads, in one-letter code: MEFSPLLQRATLIQRYKRFLADVITPDGRELTLHCPNTGAMTGCATRGDTVWYSTSDNTKRKYPHTWELTQSQSGAFICVNTLWANRLTKEAILNESISELSGYSSLKSEVKYGAERSRIDFMLQADSRPDCYIEVKSVTLAENEQGYFPDAVTERGQKHLRELMNVAAEGQRAVIFFAVLHSAITRFSPARHIDEKYAQLLSEAQQRGVEILAYKAEISAEGMALKKSLPVTL.

A DNA-binding region (H-T-H motif) is located at residues 201-220; sequence LLSEAQQRGVEILAYKAEIS.

The protein belongs to the SfsA family.

Binds to DNA non-specifically. Could be a regulatory factor involved in maltose metabolism. The protein is Sugar fermentation stimulation protein A of Shigella boydii serotype 4 (strain Sb227).